Here is a 203-residue protein sequence, read N- to C-terminus: Glycerol-3-phosphate acyltransferase (203 aa).

5 consecutive transmembrane segments (helical) span residues 10-30 (MLILWAVIGYGLGSIPFGLIL), 59-79 (GAAALTLLLDGGKGAVAVLLA), 87-107 (AAQVAALAAFVGHCYPIWLGF), 116-136 (FLGLWLALAWPVGVACCLSWL), and 160-180 (LVLLDQGAGFVLGIVLTLMVF).

This sequence belongs to the PlsY family. Probably interacts with PlsX.

Its subcellular location is the cell inner membrane. It catalyses the reaction an acyl phosphate + sn-glycerol 3-phosphate = a 1-acyl-sn-glycero-3-phosphate + phosphate. Its pathway is lipid metabolism; phospholipid metabolism. Functionally, catalyzes the transfer of an acyl group from acyl-phosphate (acyl-PO(4)) to glycerol-3-phosphate (G3P) to form lysophosphatidic acid (LPA). This enzyme utilizes acyl-phosphate as fatty acyl donor, but not acyl-CoA or acyl-ACP. The polypeptide is Glycerol-3-phosphate acyltransferase (Ruegeria pomeroyi (strain ATCC 700808 / DSM 15171 / DSS-3) (Silicibacter pomeroyi)).